The chain runs to 666 residues: DNA mismatch repair protein MutL (666 aa).

The protein belongs to the DNA mismatch repair MutL/HexB family.

Its function is as follows. This protein is involved in the repair of mismatches in DNA. It is required for dam-dependent methyl-directed DNA mismatch repair. May act as a 'molecular matchmaker', a protein that promotes the formation of a stable complex between two or more DNA-binding proteins in an ATP-dependent manner without itself being part of a final effector complex. This Clostridium botulinum (strain Okra / Type B1) protein is DNA mismatch repair protein MutL.